The following is a 690-amino-acid chain: Xylosyl- and glucuronyltransferase LARGE2 (690 aa).

Residues 1 to 8 are Cytoplasmic-facing; sequence MLPRGRPR. The helical; Signal-anchor for type II membrane protein transmembrane segment at 9–29 threads the bilayer; that stretch reads AMGAAVLLLLLLLVVGFFLFG. Topologically, residues 30 to 690 are lumenal; it reads RDPDYGLGTT…TALQQARSRA (661 aa). 2 N-linked (GlcNAc...) asparagine glycosylation sites follow: N51 and N78. The segment at 68–343 is xylosyltransferase activity; sequence LHVAIVCAGY…FLGYDGKLLR (276 aa). Positions 172 and 174 each coordinate Mn(2+). Residue N202 is glycosylated (N-linked (GlcNAc...) asparagine). Residues 344–686 are glucuronyltransferase activity; the sequence is RELFGCPNQF…LKYLTALQQA (343 aa). 2 residues coordinate Mn(2+): D492 and D494.

It in the C-terminal section; belongs to the glycosyltransferase 49 family. The protein in the N-terminal section; belongs to the glycosyltransferase 8 family. This sequence belongs to the glycosyltransferase 8 family. In terms of assembly, interacts with B4GAT1. Mn(2+) is required as a cofactor. As to expression, highly expressed in the testis and kidney, but weakly expressed in the heart and brain. Expressed during embryogenesis from 7 dpc.

The protein resides in the golgi apparatus membrane. It catalyses the reaction 3-O-[beta-D-GlcA-(1-&gt;3)-beta-D-Xyl-(1-&gt;4)-Rib-ol-P-Rib-ol-P-3-beta-D-GalNAc-(1-&gt;3)-beta-D-GlcNAc-(1-&gt;4)-(O-6-P-alpha-D-Man)]-Thr-[protein] + UDP-alpha-D-xylose = 3-O-[alpha-D-Xyl-(1-&gt;3)-beta-D-GlcA-(1-&gt;4)-beta-D-Xyl-(1-&gt;4)-Rib-ol-P-Rib-ol-P-3-beta-D-GalNAc-(1-&gt;3)-beta-D-GlcNAc-(1-&gt;4)-(O-6-P-alpha-D-Man)]-Thr-[protein] + UDP + H(+). The catalysed reaction is 3-O-{(1-&gt;[3)-alpha-D-Xyl-(1-&gt;3)-beta-D-GlcA-(1-&gt;](n)-4)-beta-D-Xyl-(1-&gt;4)-Rib-ol-P-Rib-ol-P-3-beta-D-GalNAc-(1-&gt;3)-beta-D-GlcNAc-(1-&gt;4)-O-6-P-alpha-D-Man}-L-Thr-[protein] + UDP-alpha-D-glucuronate = 3-O-{beta-D-GlcA-(1-&gt;[3)-alpha-D-Xyl-(1-&gt;3)-beta-D-GlcA-(1-&gt;](n)-4)-beta-D-Xyl-(1-&gt;4)-Rib-ol-P-Rib-ol-P-3-beta-D-GalNAc-(1-&gt;3)-beta-D-GlcNAc-(1-&gt;4)-O-6-P-alpha-D-Man}-L-Thr-[protein] + UDP + H(+). It carries out the reaction 3-O-{beta-D-GlcA-(1-&gt;[3)-alpha-D-Xyl-(1-&gt;3)-beta-D-GlcA-(1-&gt;](n)-4)-beta-D-Xyl-(1-&gt;4)-Rib-ol-P-Rib-ol-P-3-beta-D-GalNAc-(1-&gt;3)-beta-D-GlcNAc-(1-&gt;4)-O-6-P-alpha-D-Man}-L-Thr-[protein] + UDP-alpha-D-xylose = 3-O-{(1-&gt;[3)-alpha-D-Xyl-(1-&gt;3)-beta-D-GlcA-(1-&gt;](n+1)-4)-beta-D-Xyl-(1-&gt;4)-Rib-ol-P-Rib-ol-P-3-beta-D-GalNAc-(1-&gt;3)-beta-D-GlcNAc-(1-&gt;4)-O-6-P-alpha-D-Man}-L-Thr-[protein] + UDP + H(+). Its pathway is protein modification; protein glycosylation. Its function is as follows. Bifunctional glycosyltransferase with both alpha-1,3-xylosyltransferase and beta-1,3-glucuronyltransferase activities involved in the maturation of alpha-dystroglycan (DAG1) by glycosylation leading to DAG1 binding to laminin G-like domain-containing extracellular proteins with high affinity and in a phosphorylated-O-mannosyl trisaccharide dependent manner. Elongates the glucuronyl-beta-1,4-xylose-beta disaccharide primer structure by adding repeating units [-3-Xylose-alpha-1,3-GlcA-beta-1-] to produce a heteropolysaccharide. Supports the maturation of DAG1 more effectively than LARGE1. In addition, can modify both heparan sulfate (HS)- and chondroitin/dermatan sulfate (CS/DS)-proteoglycans (PGs), namely GPC4, with a glycosaminoglycan (GAG)-like polysaccharide composed of xylose and glucuronic acid to confer laminin binding. This Mus musculus (Mouse) protein is Xylosyl- and glucuronyltransferase LARGE2.